A 172-amino-acid polypeptide reads, in one-letter code: MNYFNVGKIVNTQGLQGEMRVLSVTDFAEERFKKGNTLALFDKKDQFVMDVEIASHRKVKNFDIIKFKGMYHINAIEKFRDFSLKVAEEDLSDLEEGEFYYHEIIGLEVYENDVLLGTIKEILQPGANDVWVVKRKGKRDLLLPYIPPVVLGIDIEQGRVDVEIPEGLDDEN.

Residues 96–168 (EGEFYYHEII…RVDVEIPEGL (73 aa)) enclose the PRC barrel domain.

It belongs to the RimM family. In terms of assembly, binds ribosomal protein uS19.

The protein localises to the cytoplasm. An accessory protein needed during the final step in the assembly of 30S ribosomal subunit, possibly for assembly of the head region. Essential for efficient processing of 16S rRNA. May be needed both before and after RbfA during the maturation of 16S rRNA. It has affinity for free ribosomal 30S subunits but not for 70S ribosomes. The sequence is that of Ribosome maturation factor RimM from Streptococcus gordonii (strain Challis / ATCC 35105 / BCRC 15272 / CH1 / DL1 / V288).